Here is a 185-residue protein sequence, read N- to C-terminus: N-alpha-acetyltransferase 30 (185 aa).

One can recognise an N-acetyltransferase domain in the interval 31 to 179; it reads IEYIPYQGES…DAVRLLLPLN (149 aa).

The protein belongs to the acetyltransferase family. MAK3 subfamily.

In terms of biological role, probable catalytic component of a complex displaying alpha (N-terminal) acetyltransferase activity. The polypeptide is N-alpha-acetyltransferase 30 (Dictyostelium discoideum (Social amoeba)).